A 2829-amino-acid polypeptide reads, in one-letter code: Adenomatous polyposis coli homolog (2829 aa).

Positions 4–58 (ASYDQLVKQVEALTMENTNLRQELEDNSNHLTKLETEATNMKEVLKQLQGSIEDE) form a coiled coil. 2 disordered regions span residues 80-114 (SNIP…SPVP) and 240-300 (AEAA…NSTY). The stretch at 133 to 244 (YMEELEKERL…LQSQVAEAAE (112 aa)) forms a coiled coil. Positions 242–262 (AAERTPQSKHDAGSRDAEKLP) are enriched in basic and acidic residues. Over residues 291–300 (TSVMSSNSTY) the composition is skewed to polar residues. ARM repeat units follow at residues 343–384 (QDSC…ARAS), 462–504 (EEHR…RYAG), 516–555 (ANKA…NLSW), 559–599 (VNSK…NLSA), 603–646 (ENKA…NVSS), 652–691 (EDHR…NLSA), and 694–733 (AKDQ…NLMA). Positions 833–842 (TVLPGSSSPR) are enriched in polar residues. 14 disordered regions span residues 833 to 877 (TVLP…SKRI), 901 to 941 (QENR…TKAE), 963 to 988 (SLNS…SYSE), 1032 to 1260 (SDEQ…PSIN), 1278 to 1382 (RGSS…PEHY), 1424 to 1469 (IISP…EERG), 1533 to 1612 (LEND…RKPS), 1657 to 1718 (TSLS…EDKA), 1754 to 1842 (SAAT…SPHH), 1875 to 1950 (KAEL…KMEN), 1963 to 2012 (NSSL…FHVE), 2041 to 2069 (SSAM…GGIL), 2154 to 2627 (EEKT…TIAE), and 2686 to 2829 (KEEA…VTSV). Positions 848 to 857 (SRPEKDRERT) are enriched in basic and acidic residues. 2 stretches are compositionally biased toward polar residues: residues 863 to 877 (YHST…SKRI) and 923 to 941 (RKPS…TKAE). Polar residues predominate over residues 1034-1047 (EQLNSGRQSPTQNE). Residues 1048–1067 (RWSRPKHIIDSEMKQSEQRQ) are compositionally biased toward basic and acidic residues. Composition is skewed to polar residues over residues 1068-1079 (PRTTKTTYSSYT) and 1106-1117 (RGANNQVDQSRV). Residues 1150–1159 (SEEEQQEDET) are compositionally biased toward acidic residues. Basic and acidic residues predominate over residues 1171 to 1188 (ASEEHHGEQPIDYSRKYS). Positions 1190–1208 (DVPSSAQKPSFPYSNNSSK) are enriched in polar residues. Positions 1217 to 1230 (SSNSNTPTPSPNSN) are enriched in low complexity. Polar residues-rich tracts occupy residues 1231-1244 (RQNQ…QSRP), 1301-1310 (GQESNNTLQI), and 1340-1351 (NRLQTSNISPSD). Low complexity predominate over residues 1361-1372 (SSGAKSPSKSGA). 2 stretches are compositionally biased toward basic and acidic residues: residues 1454–1469 (AKKD…EERG) and 1537–1566 (QGNK…KDML). Positions 1545–1578 (KEFIDNKAKKEDKRSEQEKDMLDDTDDDIDILEE) form a coiled coil. Over residues 1567 to 1577 (DDTDDDIDILE) the composition is skewed to acidic residues. A compositionally biased stretch (pro residues) spans 1597 to 1608 (QPTPGKPPPPVA). Residues 1671-1683 (PTNDQPNTDSLST) are compositionally biased toward polar residues. Residues 1684–1703 (DLEKRDTIPTEGRSTDDTDA) show a composition bias toward basic and acidic residues. The segment covering 1754 to 1765 (SAATSSGNSRSM) has biased composition (polar residues). Composition is skewed to basic and acidic residues over residues 1786–1795 (FKERLKKNTE) and 1875–1898 (KAEL…HENR). Composition is skewed to polar residues over residues 1926–1935 (KPTSFSSAAK) and 1984–2003 (LKQT…QTSG). Residues 2168–2186 (KPAEKSALENKKTEEEPKG) show a composition bias toward basic and acidic residues. Residues 2199-2222 (TGKSRSSSDFSSHCKQSVQTNMPS) are compositionally biased toward polar residues. 3 stretches are compositionally biased toward low complexity: residues 2256–2275 (PSKG…GTKP), 2283–2322 (GSRP…LQSP), and 2346–2359 (TTSP…SSGS). Polar residues-rich tracts occupy residues 2360 to 2408 (GRMS…TGSN) and 2415 to 2424 (RMSSTKSSGS). The span at 2456–2474 (SASFESLSSSSRADSPPRS) shows a compositional bias: low complexity. Residues 2549-2562 (SSSLPRVSTWRRTG) show a composition bias toward polar residues. The span at 2563–2573 (SSSSILSASSE) shows a compositional bias: low complexity. Positions 2574 to 2585 (SSEKAKSEDEKQ) are enriched in basic and acidic residues. Residues 2616 to 2627 (TPSNGSSSTIAE) are compositionally biased toward polar residues. Basic and acidic residues predominate over residues 2686-2695 (KEEAAKDCHT). Over residues 2730–2743 (LINNQQETNENTVA) the composition is skewed to polar residues. Positions 2749–2760 (SSSSSSKHSSPS) are enriched in low complexity. The span at 2770–2798 (FNYNPSPRKSNGENSTSRPSQIPTPVTNS) shows a compositional bias: polar residues.

It belongs to the adenomatous polyposis coli (APC) family.

In terms of biological role, promotes rapid degradation of CTNNB1 and participates in Wnt signaling as a negative regulator. The sequence is that of Adenomatous polyposis coli homolog (apc) from Xenopus laevis (African clawed frog).